Here is a 502-residue protein sequence, read N- to C-terminus: MLASIILSGWLLLAWLYFLWSRRRYYKVAWQLRGPIGWPLIGMGLQMMNPETFLQYMDGLSRQFKAPFISWMGTSCFLYINDPHSVEQILNSTHCTNKGDFYRFMSSAIGDGLFTSSSPRWHKHRRLINPAFGRQILSNFLPIFNAEAEVLLQKLELEGVQHGKRLEIYQILKKIVLEAACQTTMGKKMNFQHDGSLCIFKAYNGLTEVCVKRMLSPWLYPDLIYRRSGLFRLQQKVVGILFGFIEQLLEPIVSVVAANSNPDQQRSEMEMRGKSKAIFIEQVREHVERGQLSWQDVRDEANVTIAATFETTSTALYFTILCLAMHPCYQEKLHKELVTELPPSGDINLEQLQRLEYTEMVINEAMRLFAPVPMVLRSADQDIQLKRGDGEFLIPRGTQIGIDIYNMQRDERVWGPLSRTYNPDAHFGLDSPQRHAFAFVPFTKGLRMCIGYRYAQMLMKLLLARIFRSYRISTEARLEELLVKGNISLKLKDYPLCRVERR.

Heme is bound at residue Cys-449.

This sequence belongs to the cytochrome P450 family. Requires heme as cofactor.

It is found in the endoplasmic reticulum membrane. The protein resides in the microsome membrane. In terms of biological role, may be involved in the metabolism of insect hormones and in the breakdown of synthetic insecticides. In Drosophila melanogaster (Fruit fly), this protein is Probable cytochrome P450 313b1 (Cyp313b1).